An 872-amino-acid polypeptide reads, in one-letter code: Alanine--tRNA ligase (872 aa).

Residues His-567, His-571, Cys-669, and His-673 each coordinate Zn(2+).

This sequence belongs to the class-II aminoacyl-tRNA synthetase family. It depends on Zn(2+) as a cofactor.

Its subcellular location is the cytoplasm. The enzyme catalyses tRNA(Ala) + L-alanine + ATP = L-alanyl-tRNA(Ala) + AMP + diphosphate. Catalyzes the attachment of alanine to tRNA(Ala) in a two-step reaction: alanine is first activated by ATP to form Ala-AMP and then transferred to the acceptor end of tRNA(Ala). Also edits incorrectly charged Ser-tRNA(Ala) and Gly-tRNA(Ala) via its editing domain. The chain is Alanine--tRNA ligase from Streptococcus agalactiae serotype III (strain NEM316).